Consider the following 291-residue polypeptide: Ribosomal RNA small subunit methyltransferase H (291 aa).

Residues 36–38 (GGH), Asp-55, Leu-88, Asp-102, and Gln-109 each bind S-adenosyl-L-methionine. Residues 268 to 291 (KPTQEETKNNPRARSAKLRVAERI) are disordered.

Belongs to the methyltransferase superfamily. RsmH family.

It localises to the cytoplasm. The catalysed reaction is cytidine(1402) in 16S rRNA + S-adenosyl-L-methionine = N(4)-methylcytidine(1402) in 16S rRNA + S-adenosyl-L-homocysteine + H(+). Specifically methylates the N4 position of cytidine in position 1402 (C1402) of 16S rRNA. This chain is Ribosomal RNA small subunit methyltransferase H, found in Thermosipho melanesiensis (strain DSM 12029 / CIP 104789 / BI429).